Here is a 298-residue protein sequence, read N- to C-terminus: Acetylglutamate kinase (298 aa).

Substrate contacts are provided by residues 69–70, Arg-91, and Asn-196; that span reads GG.

This sequence belongs to the acetylglutamate kinase family. ArgB subfamily.

It is found in the cytoplasm. The enzyme catalyses N-acetyl-L-glutamate + ATP = N-acetyl-L-glutamyl 5-phosphate + ADP. The protein operates within amino-acid biosynthesis; L-arginine biosynthesis; N(2)-acetyl-L-ornithine from L-glutamate: step 2/4. In terms of biological role, catalyzes the ATP-dependent phosphorylation of N-acetyl-L-glutamate. The protein is Acetylglutamate kinase of Rhodopseudomonas palustris (strain TIE-1).